The sequence spans 531 residues: NADH-quinone oxidoreductase subunit N (531 aa).

Transmembrane regions (helical) follow at residues 13-33 (LAPI…EAFA), 45-65 (LALL…AEVI), 85-105 (PALA…LVIA), 150-170 (LFSV…TLFI), 200-220 (YFLL…LLYG), 242-262 (GLLV…VGAV), 289-309 (VAAF…MTWD), 310-330 (IQPF…VLAI), 339-359 (LAYS…AMSP), 365-385 (VFFY…LVAL), 415-435 (VATV…TSGF), 460-480 (ASAA…FTSP), and 496-516 (GFTA…GVWP).

Belongs to the complex I subunit 2 family. In terms of assembly, NDH-1 is composed of 14 different subunits. Subunits NuoA, H, J, K, L, M, N constitute the membrane sector of the complex.

Its subcellular location is the cell membrane. It carries out the reaction a quinone + NADH + 5 H(+)(in) = a quinol + NAD(+) + 4 H(+)(out). Functionally, NDH-1 shuttles electrons from NADH, via FMN and iron-sulfur (Fe-S) centers, to quinones in the respiratory chain. The immediate electron acceptor for the enzyme in this species is believed to be a menaquinone. Couples the redox reaction to proton translocation (for every two electrons transferred, four hydrogen ions are translocated across the cytoplasmic membrane), and thus conserves the redox energy in a proton gradient. This chain is NADH-quinone oxidoreductase subunit N, found in Beutenbergia cavernae (strain ATCC BAA-8 / DSM 12333 / CCUG 43141 / JCM 11478 / NBRC 16432 / NCIMB 13614 / HKI 0122).